Reading from the N-terminus, the 396-residue chain is 1-deoxy-D-xylulose 5-phosphate reductoisomerase (396 aa).

6 residues coordinate NADPH: Thr-15, Gly-16, Ser-17, Ile-18, Gly-41, and Asn-129. Lys-130 is a 1-deoxy-D-xylulose 5-phosphate binding site. Glu-131 is a binding site for NADPH. Position 155 (Asp-155) interacts with Mn(2+). Ser-156, Glu-157, Ser-182, and His-205 together coordinate 1-deoxy-D-xylulose 5-phosphate. Residue Glu-157 coordinates Mn(2+). Gly-211 is an NADPH binding site. Positions 218, 223, 224, and 227 each coordinate 1-deoxy-D-xylulose 5-phosphate. A Mn(2+)-binding site is contributed by Glu-227.

The protein belongs to the DXR family. Mg(2+) is required as a cofactor. Mn(2+) serves as cofactor.

The catalysed reaction is 2-C-methyl-D-erythritol 4-phosphate + NADP(+) = 1-deoxy-D-xylulose 5-phosphate + NADPH + H(+). It functions in the pathway isoprenoid biosynthesis; isopentenyl diphosphate biosynthesis via DXP pathway; isopentenyl diphosphate from 1-deoxy-D-xylulose 5-phosphate: step 1/6. Its function is as follows. Catalyzes the NADPH-dependent rearrangement and reduction of 1-deoxy-D-xylulose-5-phosphate (DXP) to 2-C-methyl-D-erythritol 4-phosphate (MEP). This Xanthomonas campestris pv. campestris (strain B100) protein is 1-deoxy-D-xylulose 5-phosphate reductoisomerase.